Reading from the N-terminus, the 146-residue chain is uncharacterized protein (146 aa).

The N-acetyltransferase domain maps to 7-146 (LQINYKTDEL…EGHDILIWNP (140 aa)).

This is an uncharacterized protein from Staphylococcus epidermidis (strain ATCC 35984 / DSM 28319 / BCRC 17069 / CCUG 31568 / BM 3577 / RP62A).